The primary structure comprises 473 residues: Sulfhydrylase-like protein lolC1 (473 aa).

An N6-(pyridoxal phosphate)lysine modification is found at lysine 226.

Belongs to the trans-sulfuration enzymes family. The cofactor is pyridoxal 5'-phosphate.

It participates in alkaloid biosynthesis. Its function is as follows. Sulfhydrylase-like protein; part of the gene cluster that mediates the biosynthesis of loline alkaloids, potent insecticidal agents composed of a pyrrolizidine ring system and an uncommon ether bridge linking carbons 2 and 7. Lolines are structurally differentiated by the various modifications of the L-amino group and include norloline, loline, N-methylloline, N-acetylloline, N-acetylnorloline, and N-formylloline. The first committed step is the condensation of O-acetyl-L-homoserine (derived from L-aspartic acid) and L-proline, probably catalyzed by the gamma-type pyridoxal 5'-phosphate(PLP)-dependent enzyme lolC, to give the diamino diacid, NACPP. Ensuing cyclization, decarboxylation, and acetylation steps yield 1-exo-acetamidopyrrolizidine (AcAP). LolO is required for installation of the ether bridge upon the pathway intermediate, 1-exo-acetamidopyrrolizidine (AcAP). In sequential 2-oxoglutarate- and O(2)-consuming steps, lolO removes hydrogens from C2 and C7 of AcAP to form both carbon-oxygen bonds in N-acetylnorloline (NANL), the precursor to all other lolines. The enzymes lolD, lolE, lolF and lolT have also been proposed to be involved in the ether-bridge installation. Further processing of the exocyclic moiety of NANL by fungal N-acetamidase (LolN), methyltransferase (LolM), and cytochrome P450 (LolP) enzymes, with occasional involvement of a plant acetyltransferase, generates the other known lolines. LolN transforms NANL to norlonine which is monomethylated and dimethylated to respectively lonine and N-methyllonine (NML) by lolM. LolP catalyzes hydroxylation of the methyl group in N-methylloline (NML) and further oxygenation to N-formylloline (NFL). A plant acetyltransferase is responsible for the acetylation of loline to form N-acetylloline (NAL). LolA might interact with aspartate kinase to prevent feedback inhibition of its activity by these end products and thereby promote production of L-homoserine from L-aspartate. The sequence is that of Sulfhydrylase-like protein lolC1 from Epichloe uncinata (Endophyte fungus).